The primary structure comprises 410 residues: Histone-lysine N-methyltransferase SUV39H2 (410 aa).

The 59-residue stretch at 47 to 105 (YEVEYLCDYKVVKDMEYYLVKWKGWPDSTNTWEPLQNLKCPLLLQQFFNDKHNYLSQVK) folds into the Chromo domain. The 59-residue stretch at 189 to 247 (FGCSCTDCFFEKCCPAEAGVLLAYNKNQQIKIPPGTPIYECNSRCQCGPDCPNRIVQKG) folds into the Pre-SET domain. The Zn(2+) site is built by Cys-191, Cys-193, Cys-196, Cys-201, Cys-202, Cys-229, Cys-233, Cys-235, and Cys-239. The 124-residue stretch at 250–373 (YSLCIFRTSN…AGEELTFDYQ (124 aa)) folds into the SET domain. S-adenosyl-L-methionine contacts are provided by residues 261–263 (CGW), Tyr-304, and 330–331 (NH). Cys-333 contacts Zn(2+). Residues Ser-381, Ser-384, and Ser-388 each carry the phosphoserine modification. One can recognise a Post-SET domain in the interval 394-410 (ARTVCKCGAVTCRGYLN). Residues Cys-398, Cys-400, and Cys-405 each coordinate Zn(2+).

Belongs to the class V-like SAM-binding methyltransferase superfamily. Histone-lysine methyltransferase family. Suvar3-9 subfamily. In terms of assembly, interacts with SMAD5. The large PER complex involved in the histone methylation is composed of at least PER2, CBX3, TRIM28, SUV39H1 and/or SUV39H2; CBX3 mediates the formation of the complex. In terms of processing, ubiquitinated by the DCX(DCAF13) E3 ubiquitin ligase complex, leading to its degradation.

It is found in the nucleus. It localises to the chromosome. The protein resides in the centromere. It catalyses the reaction L-lysyl(9)-[histone H3] + 3 S-adenosyl-L-methionine = N(6),N(6),N(6)-trimethyl-L-lysyl(9)-[histone H3] + 3 S-adenosyl-L-homocysteine + 3 H(+). In terms of biological role, histone methyltransferase that specifically trimethylates 'Lys-9' of histone H3 using monomethylated H3 'Lys-9' as substrate. H3 'Lys-9' trimethylation represents a specific tag for epigenetic transcriptional repression by recruiting HP1 (CBX1, CBX3 and/or CBX5) proteins to methylated histones. Mainly functions in heterochromatin regions, thereby playing a central role in the establishment of constitutive heterochromatin at pericentric and telomere regions. H3 'Lys-9' trimethylation is also required to direct DNA methylation at pericentric repeats. SUV39H1 is targeted to histone H3 via its interaction with RB1 and is involved in many processes, such as cell cycle regulation, transcriptional repression and regulation of telomere length. May participate in regulation of higher-order chromatin organization during spermatogenesis. Recruited by the large PER complex to the E-box elements of the circadian target genes such as PER2 itself or PER1, contributes to the conversion of local chromatin to a heterochromatin-like repressive state through H3 'Lys-9' trimethylation. This chain is Histone-lysine N-methyltransferase SUV39H2 (SUV39H2), found in Bos taurus (Bovine).